The following is a 1845-amino-acid chain: Collagen alpha-1(XXVII) chain (1845 aa).

Residues 1–39 form the signal peptide; it reads MGTGFARGARGTAASGPGGGFLFAWILVSFTCHLASTQG. A propeptide spans 40–609 (N-terminal propeptide); it reads APEDVDVLQR…LGPTPFPMLM (570 aa). In terms of domain architecture, Laminin G-like spans 72–237; the sequence is PSGFIFTQRA…NYCAHLRERC (166 aa). Residue Asn-272 is glycosylated (N-linked (GlcNAc...) asparagine). 4 disordered regions span residues 299–478, 502–572, 608–774, and 827–1608; these read TKPL…VPKT, PPLG…RPST, LMGP…MGRP, and LMGG…HPIQ. The span at 312–323 shows a compositional bias: polar residues; that stretch reads HSSSQTPLSPAK. Low complexity-rich tracts occupy residues 327–343 and 356–372; these read RKTP…NSTR and TTTS…SVSP. N-linked (GlcNAc...) asparagine glycosylation is present at Asn-340. Positions 429–439 are enriched in pro residues; it reads PRPPVPSPQPL. Over residues 444 to 454 the composition is skewed to polar residues; sequence GLSKKFTNPTV. Positions 554 to 564 are enriched in basic and acidic residues; the sequence is SARDASPRDLT. Collagen-like domains follow at residues 610–664, 673–732, 742–801, 817–876, 877–936, 937–996, 997–1038, 1039–1096, 1117–1176, 1177–1236, and 1240–1299; these read GPPG…GDPG, GAKG…PGPV, GYIG…PGPP, GYPG…PGPL, GKAG…EGPM, GPPG…VGEK, GDRG…PGSR, GLPG…GAKG, GSQG…PGLE, GDHG…QGEK, and GAKG…NGHK. Residues 610-1603 are triple-helical; sequence GPPGSKGDCG…RGRPGPPGPP (994 aa). A compositionally biased stretch (pro residues) spans 639–654; the sequence is RGPPGPYGNPGPPGPP. Low complexity-rich tracts occupy residues 677–690 and 699–719; these read NMGL…PGPL and PGAA…SPGA. Gly residues predominate over residues 865–874; that stretch reads GLPGGRGKPG. Residues 896–909 show a composition bias toward low complexity; it reads FPGDIGPPGDNGPE. The span at 1018 to 1027 shows a compositional bias: gly residues; it reads GTPGGIGNPG. Low complexity-rich tracts occupy residues 1074 to 1086, 1112 to 1122, and 1152 to 1167; these read RGRP…QGAA, LPGEPGSQGPQ, and KGDL…QGLI. 2 stretches are compositionally biased toward basic and acidic residues: residues 1187-1212 and 1226-1238; these read LKGD…KGED and REGK…EKGQ. Composition is skewed to basic and acidic residues over residues 1311-1323 and 1335-1345; these read KGEK…DGKT and PVGDRGDRGEP. One can recognise a Collagen-like 12 domain in the interval 1325–1384; the sequence is GPPGPPGDRGPVGDRGDRGEPGDPGYPGQEGVQGLRGEPGQQGQPGHPGPRGRPGPKGSK. Low complexity-rich tracts occupy residues 1360–1369, 1395–1422, and 1438–1465; these read RGEPGQQGQP, KAGP…RQGP, and PGYQ…PGVA. 3 Collagen-like domains span residues 1424–1483, 1484–1543, and 1544–1603; these read GTAG…SGLP, GQLG…KGIQ, and GPRG…PGPP. The segment covering 1557-1572 has biased composition (low complexity); it reads IIGPPGMLGPSGLPGP. Pro residues predominate over residues 1588 to 1605; that stretch reads RGPPGPRGRPGPPGPPWH. The propeptide at 1607–1845 is C-terminal propeptide; the sequence is IQFQQDDLGA…RLEVGPACFL (239 aa). Positions 1645–1845 constitute a Fibrillar collagen NC1 domain; that stretch reads GEIFKTLHYL…RLEVGPACFL (201 aa). 3 cysteine pairs are disulfide-bonded: Cys-1675–Cys-1707, Cys-1716–Cys-1843, and Cys-1752–Cys-1796. The Ca(2+) site is built by Asp-1693, Asn-1695, Cys-1698, and Asp-1701. An N-linked (GlcNAc...) asparagine glycan is attached at Asn-1754.

The protein belongs to the fibrillar collagen family. As to expression, highly expressed in cartilage, eye and ear.

It localises to the secreted. The protein resides in the extracellular space. It is found in the extracellular matrix. Its function is as follows. Plays a role during the calcification of cartilage and the transition of cartilage to bone. The sequence is that of Collagen alpha-1(XXVII) chain (Col27a1) from Mus musculus (Mouse).